Here is a 456-residue protein sequence, read N- to C-terminus: Bifunctional protein GlmU (456 aa).

The segment at 1–228 is pyrophosphorylase; that stretch reads MPQNTLNTVI…SHLAAGVNNK (228 aa). Residues 11-14, Lys25, Gln75, 80-81, 102-104, Gly138, Glu153, Asn168, and Asn226 each bind UDP-N-acetyl-alpha-D-glucosamine; these read LAAG, GT, and YGD. A Mg(2+)-binding site is contributed by Asp104. Mg(2+) is bound at residue Asn226. A linker region spans residues 229-249; it reads RQLAELERIFQTEQAQELLKA. The tract at residues 250 to 456 is N-acetyltransferase; the sequence is GVTLRDPARF…GWMRPEKDKQ (207 aa). Residues Arg332 and Lys350 each coordinate UDP-N-acetyl-alpha-D-glucosamine. His362 serves as the catalytic Proton acceptor. Positions 365 and 376 each coordinate UDP-N-acetyl-alpha-D-glucosamine. Acetyl-CoA is bound by residues Ala379, 385-386, Ser404, Ala422, and Arg439; that span reads NY.

This sequence in the N-terminal section; belongs to the N-acetylglucosamine-1-phosphate uridyltransferase family. It in the C-terminal section; belongs to the transferase hexapeptide repeat family. As to quaternary structure, homotrimer. The cofactor is Mg(2+).

It is found in the cytoplasm. It catalyses the reaction alpha-D-glucosamine 1-phosphate + acetyl-CoA = N-acetyl-alpha-D-glucosamine 1-phosphate + CoA + H(+). The catalysed reaction is N-acetyl-alpha-D-glucosamine 1-phosphate + UTP + H(+) = UDP-N-acetyl-alpha-D-glucosamine + diphosphate. The protein operates within nucleotide-sugar biosynthesis; UDP-N-acetyl-alpha-D-glucosamine biosynthesis; N-acetyl-alpha-D-glucosamine 1-phosphate from alpha-D-glucosamine 6-phosphate (route II): step 2/2. It participates in nucleotide-sugar biosynthesis; UDP-N-acetyl-alpha-D-glucosamine biosynthesis; UDP-N-acetyl-alpha-D-glucosamine from N-acetyl-alpha-D-glucosamine 1-phosphate: step 1/1. Its pathway is bacterial outer membrane biogenesis; LPS lipid A biosynthesis. Functionally, catalyzes the last two sequential reactions in the de novo biosynthetic pathway for UDP-N-acetylglucosamine (UDP-GlcNAc). The C-terminal domain catalyzes the transfer of acetyl group from acetyl coenzyme A to glucosamine-1-phosphate (GlcN-1-P) to produce N-acetylglucosamine-1-phosphate (GlcNAc-1-P), which is converted into UDP-GlcNAc by the transfer of uridine 5-monophosphate (from uridine 5-triphosphate), a reaction catalyzed by the N-terminal domain. The polypeptide is Bifunctional protein GlmU (Neisseria gonorrhoeae (strain ATCC 700825 / FA 1090)).